A 99-amino-acid chain; its full sequence is MMLIECPNCGPRNENEFKYGGEAHVAYPEDPNALSDKEWSRYLFYRGNKKGIFAERWVHSGGCRKWFNALRDTVSYEFKAVYRAGEARPQLDSTEGGTR.

Positions 6, 9, 59, and 63 each coordinate Zn(2+).

It belongs to the SoxD family. As to quaternary structure, heterotetramer composed of subunits alpha (SoxA), beta (SoxB), gamma (SoxG) and delta (SoxD).

It is found in the cytoplasm. The catalysed reaction is sarcosine + (6S)-5,6,7,8-tetrahydrofolate + O2 = (6R)-5,10-methylene-5,6,7,8-tetrahydrofolate + glycine + H2O2. It carries out the reaction sarcosine + O2 + H2O = formaldehyde + glycine + H2O2. Its activity is regulated as follows. Inhibited by Zn(2+), Cu(2+), Cd(2+), Hg(2+), Ag(+), p-chloromercuribenzoate (p-CMB), iodoacetamide, N-ethylmaleimide, CN(-), o-phenanthroline and sodium lauryl sulfate. Functionally, in the presence of tetrahydrofolate, catalyzes the oxidative demethylation of sarcosine to yield glycine, 5,10-methylenetetrahydrofolate and hydrogen peroxide. In the absence of tetrahydrofolate, catalyzes the oxidative demethylation of sarcosine to yield glycine, formaldehyde and hydrogen peroxide. Can also use N-methyl-L-alanine and N-ethyl-L-glycine. Is very specific for oxygen as an acceptor. The polypeptide is Sarcosine oxidase subunit delta (Corynebacterium sp. (strain U-96)).